The sequence spans 367 residues: D-alanine--D-alanine ligase (367 aa).

The ATP-grasp domain maps to 145–351 (KRLLRDAGLP…QPALMDALIA (207 aa)). 174 to 229 (HAVGCSELFIKPANLGSSVGISKARTPQEFAAACDLALRFDGKILIERCISPVREI) contributes to the ATP binding site. Positions 306, 318, and 320 each coordinate Mg(2+).

It belongs to the D-alanine--D-alanine ligase family. Mg(2+) is required as a cofactor. It depends on Mn(2+) as a cofactor.

Its subcellular location is the cytoplasm. The catalysed reaction is 2 D-alanine + ATP = D-alanyl-D-alanine + ADP + phosphate + H(+). The protein operates within cell wall biogenesis; peptidoglycan biosynthesis. Cell wall formation. This is D-alanine--D-alanine ligase from Bradyrhizobium sp. (strain BTAi1 / ATCC BAA-1182).